Consider the following 247-residue polypeptide: Orotidine 5'-phosphate decarboxylase (247 aa).

Substrate contacts are provided by residues D16, K38, 66–75 (DLKFHDIPNT), T130, R191, Q200, G220, and R221. The Proton donor role is filled by K68.

The protein belongs to the OMP decarboxylase family. Type 1 subfamily. In terms of assembly, homodimer.

It carries out the reaction orotidine 5'-phosphate + H(+) = UMP + CO2. It functions in the pathway pyrimidine metabolism; UMP biosynthesis via de novo pathway; UMP from orotate: step 2/2. Functionally, catalyzes the decarboxylation of orotidine 5'-monophosphate (OMP) to uridine 5'-monophosphate (UMP). The sequence is that of Orotidine 5'-phosphate decarboxylase from Rhodospirillum rubrum (strain ATCC 11170 / ATH 1.1.1 / DSM 467 / LMG 4362 / NCIMB 8255 / S1).